Consider the following 131-residue polypeptide: UPF0102 protein RALTA_A3032 (131 aa).

The span at 1 to 12 (MMRSFKSTQEPS) shows a compositional bias: polar residues. The disordered stretch occupies residues 1–21 (MMRSFKSTQEPSRQARGAQAE).

The protein belongs to the UPF0102 family.

This Cupriavidus taiwanensis (strain DSM 17343 / BCRC 17206 / CCUG 44338 / CIP 107171 / LMG 19424 / R1) (Ralstonia taiwanensis (strain LMG 19424)) protein is UPF0102 protein RALTA_A3032.